Here is a 331-residue protein sequence, read N- to C-terminus: MIDTSIPLVDLHRHLDGNVRVNTIWELGHQHGIALPADSLETLAPFVQIQGKETSLVAFLKKLDWMVAVLADLDAVKRVAYENVADAALSGLDYAELRFSPYYMAMNHKLPIEGVVEAVVDGVKAGLKDYNVKINLIGIMSRSFGQAACTQELEGLLAHKQHLVAMDLAGDELGFPGELFNDHFKRVRDAGLAITAHAGEAAGSQSMWQAIQELGATRIGHGVNAIHDPKLMEYLAKHRIGIESCPTSNLHTSTVVSYAEHPFRTFMDAGVLISLNTDDPGVSAIDIKHEYRIAKSELKLTDAELARVQRNGVEMAFLSDSERKALYAAKI.

Residues histidine 12 and histidine 14 each coordinate Zn(2+). The substrate site is built by histidine 14, aspartate 16, and glycine 170. Residue histidine 197 coordinates Zn(2+). Catalysis depends on glutamate 200, which acts as the Proton donor. Aspartate 278 contributes to the Zn(2+) binding site. Position 279 (aspartate 279) interacts with substrate.

Belongs to the metallo-dependent hydrolases superfamily. Adenosine and AMP deaminases family. Adenosine deaminase subfamily. Requires Zn(2+) as cofactor.

It catalyses the reaction adenosine + H2O + H(+) = inosine + NH4(+). The catalysed reaction is 2'-deoxyadenosine + H2O + H(+) = 2'-deoxyinosine + NH4(+). Its function is as follows. Catalyzes the hydrolytic deamination of adenosine and 2-deoxyadenosine. The chain is Adenosine deaminase from Shewanella putrefaciens (strain CN-32 / ATCC BAA-453).